The sequence spans 88 residues: Small ribosomal subunit protein uS15 (88 aa).

This sequence belongs to the universal ribosomal protein uS15 family. As to quaternary structure, part of the 30S ribosomal subunit. Forms a bridge to the 50S subunit in the 70S ribosome, contacting the 23S rRNA.

Functionally, one of the primary rRNA binding proteins, it binds directly to 16S rRNA where it helps nucleate assembly of the platform of the 30S subunit by binding and bridging several RNA helices of the 16S rRNA. Forms an intersubunit bridge (bridge B4) with the 23S rRNA of the 50S subunit in the ribosome. This chain is Small ribosomal subunit protein uS15, found in Leptospira borgpetersenii serovar Hardjo-bovis (strain JB197).